We begin with the raw amino-acid sequence, 331 residues long: MEKAFRPHFFNHGKPDANPKEKKNCHWCQIRSFATHAQLPISIVNREDDAFLNPNFRFIDHSIIGKNVPVADQSFRVGCSCASDEECMYSTCQCLDEMAPDSDEEADPYTRKKRFAYYSQGAKKGLLRDRVLQSQEPIYECHQGCACSKDCPNRVVERGRTVPLQIFRTKDRGWGVKCPVNIKRGQFVDRYLGEIITSEEADRRRAESTIARRKDVYLFALDKFSDPDSLDPLLAGQPLEVDGEYMSGPTRFINHSCDPNMAIFARVGDHADKHIHDLALFAIKDIPKGTELTFDYVNGLTGLESDAHDPSKISEMTKCLCGTAKCRGYLW.

Residues 77–159 enclose the Pre-SET domain; the sequence is VGCSCASDEE…DCPNRVVERG (83 aa). Positions 79, 81, 87, 92, 94, 141, 145, 147, and 151 each coordinate Zn(2+). Residues 162-297 form the SET domain; that stretch reads VPLQIFRTKD…KGTELTFDYV (136 aa). S-adenosyl-L-methionine-binding positions include 172–174, Asp-215, Tyr-217, Arg-251, and 254–255; these read RGW and NH. Residues Cys-257, Cys-319, Cys-321, and Cys-326 each coordinate Zn(2+). The Post-SET domain maps to 315–331; the sequence is EMTKCLCGTAKCRGYLW.

This sequence belongs to the class V-like SAM-binding methyltransferase superfamily. Histone-lysine methyltransferase family. Suvar3-9 subfamily.

Its subcellular location is the nucleus. The protein localises to the chromosome. The catalysed reaction is L-lysyl(9)-[histone H3] + 3 S-adenosyl-L-methionine = N(6),N(6),N(6)-trimethyl-L-lysyl(9)-[histone H3] + 3 S-adenosyl-L-homocysteine + 3 H(+). Its function is as follows. Histone methyltransferase that specifically trimethylates histone H3 to form H3K9me3. H3K9me3 marks chromatin regions for DNA methylation. Dim-5 recognizes Arg-8 to Gly-12 of the H3 tail with Thr-11 and Gly-12 being the most important specificity determinants, the recognition of whcih is important to distinguish H3K9 from H3K27 and H4K20. This chain is Histone-lysine N-methyltransferase, H3 lysine-9 specific dim-5 (dim-5), found in Neurospora crassa (strain ATCC 24698 / 74-OR23-1A / CBS 708.71 / DSM 1257 / FGSC 987).